A 202-amino-acid chain; its full sequence is Large ribosomal subunit protein bL25 (202 aa).

The protein belongs to the bacterial ribosomal protein bL25 family. CTC subfamily. In terms of assembly, part of the 50S ribosomal subunit; part of the 5S rRNA/L5/L18/L25 subcomplex. Contacts the 5S rRNA. Binds to the 5S rRNA independently of L5 and L18.

Functionally, this is one of the proteins that binds to the 5S RNA in the ribosome where it forms part of the central protuberance. The polypeptide is Large ribosomal subunit protein bL25 (Methylococcus capsulatus (strain ATCC 33009 / NCIMB 11132 / Bath)).